A 222-amino-acid chain; its full sequence is Eukaryotic translation initiation factor 3 subunit K (222 aa).

One can recognise a PCI domain in the interval 46 to 208; it reads YDLEANLAVL…KIKTKNITEK (163 aa).

It belongs to the eIF-3 subunit K family. As to quaternary structure, component of the eukaryotic translation initiation factor 3 (eIF-3) complex. The eIF-3 complex interacts with pix.

It is found in the cytoplasm. In terms of biological role, component of the eukaryotic translation initiation factor 3 (eIF-3) complex, which is involved in protein synthesis of a specialized repertoire of mRNAs and, together with other initiation factors, stimulates binding of mRNA and methionyl-tRNAi to the 40S ribosome. The eIF-3 complex specifically targets and initiates translation of a subset of mRNAs involved in cell proliferation. In Drosophila persimilis (Fruit fly), this protein is Eukaryotic translation initiation factor 3 subunit K.